The following is a 114-amino-acid chain: Putative pterin-4-alpha-carbinolamine dehydratase (114 aa).

It belongs to the pterin-4-alpha-carbinolamine dehydratase family.

It carries out the reaction (4aS,6R)-4a-hydroxy-L-erythro-5,6,7,8-tetrahydrobiopterin = (6R)-L-erythro-6,7-dihydrobiopterin + H2O. The chain is Putative pterin-4-alpha-carbinolamine dehydratase from Pseudoalteromonas translucida (strain TAC 125).